We begin with the raw amino-acid sequence, 90 residues long: DNA-binding protein HU-alpha (90 aa).

This sequence belongs to the bacterial histone-like protein family. Heterodimer of an alpha and a beta chain.

Functionally, histone-like DNA-binding protein which is capable of wrapping DNA to stabilize it, and thus to prevent its denaturation under extreme environmental conditions. The polypeptide is DNA-binding protein HU-alpha (hupA) (Salmonella typhi).